The chain runs to 310 residues: Hairy/enhancer-of-split related with YRPW motif-like protein (310 aa).

The disordered stretch occupies residues 1-21 (MKRPHDYSSPDSDTDELIDVG). Positions 12 to 21 (SDTDELIDVG) are enriched in acidic residues. The 56-residue stretch at 43–98 (ARKKRRGIIEKRRRDRINHSLSELRRLVPSAFEKQGSSKLEKAEILQMTVDHLKLL) folds into the bHLH domain. Positions 116-152 (YRTLGFRECVGEVVRYLSSLEGVESSDPIGARLVSHL) constitute an Orange domain. Composition is skewed to low complexity over residues 182–192 (LQAASPPASST) and 261–273 (PSSS…SSPP). 2 disordered regions span residues 182–208 (LQAA…HGTA) and 248–310 (HRLQ…IGAF). Residues 293-302 (LSSSSKSAQA) are compositionally biased toward polar residues.

The protein belongs to the HEY family.

The protein localises to the nucleus. In terms of biological role, transcriptional repressor which functions as a downstream effector of Notch signaling. This chain is Hairy/enhancer-of-split related with YRPW motif-like protein (heyl), found in Danio rerio (Zebrafish).